A 540-amino-acid polypeptide reads, in one-letter code: Maintenance of mitochondrial morphology protein 1 (540 aa).

Residues 1 to 25 (MAGPSNQTQPPPPVLTQPSLSFTQG) are Lumenal-facing. Residues 26–46 (LLVGQLSVVLLIGAFIKFFIF) form a helical membrane-spanning segment. Over 47–540 (GEAPPHPSRN…GSMPDPVVVT (494 aa)) the chain is Cytoplasmic. Disordered regions lie at residues 52–135 (HPSR…SHQP), 275–331 (GPGT…ATAA), 416–471 (GRTG…GGSM), and 509–540 (YGGA…VVVT). Composition is skewed to polar residues over residues 69 to 81 (YSLN…SSPR), 88 to 105 (STSN…NTRS), and 112 to 121 (YSATPTNPTS). Residues 122–132 (KHSRSRPHHSS) are compositionally biased toward basic residues. Residues 134-409 (QPESLDWFNV…EPRVQVVGLP (276 aa)) form the SMP-LTD domain. Residues 321 to 331 (TNTNTAGATAA) show a composition bias toward low complexity. 2 stretches are compositionally biased toward gly residues: residues 442 to 471 (TAGG…GGSM) and 511 to 521 (GAQGGGGGGGR).

The protein belongs to the MMM1 family. In terms of assembly, homodimer. Component of the ER-mitochondria encounter structure (ERMES) or MDM complex, composed of MMM1, MDM10, MDM12 and MDM34. An MMM1 homodimer associates with one molecule of MDM12 on each side in a pairwise head-to-tail manner, and the SMP-LTD domains of MMM1 and MDM12 generate a continuous hydrophobic tunnel for phospholipid trafficking.

The protein localises to the endoplasmic reticulum membrane. In terms of biological role, component of the ERMES/MDM complex, which serves as a molecular tether to connect the endoplasmic reticulum (ER) and mitochondria. Components of this complex are involved in the control of mitochondrial shape and protein biogenesis, and function in nonvesicular lipid trafficking between the ER and mitochondria. The MDM12-MMM1 subcomplex functions in the major beta-barrel assembly pathway that is responsible for biogenesis of all outer membrane beta-barrel proteins, and acts in a late step after the SAM complex. The MDM10-MDM12-MMM1 subcomplex further acts in the TOM40-specific pathway after the action of the MDM12-MMM1 complex. Essential for establishing and maintaining the structure of mitochondria and maintenance of mtDNA nucleoids. The polypeptide is Maintenance of mitochondrial morphology protein 1 (Blastomyces gilchristii (strain SLH14081) (Blastomyces dermatitidis)).